The sequence spans 301 residues: Sulfate adenylyltransferase subunit 2 (301 aa).

Residues 279 to 301 form a disordered region; sequence RQGRLIDRDEAGSMEKKKREGYF.

It belongs to the PAPS reductase family. CysD subfamily. In terms of assembly, sulfate-activating enzymes, NodP and NodQ, may be physically associated.

It carries out the reaction sulfate + ATP + H(+) = adenosine 5'-phosphosulfate + diphosphate. Its function is as follows. Proposed to provide activated sulfate for transfer to nod factor. The sequence is that of Sulfate adenylyltransferase subunit 2 (nodP) from Rhizobium sp. (strain N33).